The following is a 572-amino-acid chain: EF-hand calcium-binding domain-containing protein 12 (572 aa).

Disordered stretches follow at residues 62–85 (VPRK…KPIP) and 146–169 (EQSA…PRLS). An EF-hand domain is found at 196-231 (SRKIKILEIFHKVGQGENQRITREEFIAAVKAVGVP). Glutamate 212 is a binding site for Ca(2+).

The sequence is that of EF-hand calcium-binding domain-containing protein 12 (EFCAB12) from Homo sapiens (Human).